The primary structure comprises 404 residues: Glucose-1-phosphate adenylyltransferase 2 (404 aa).

Residues Y97, G162, 177–178, and S195 contribute to the alpha-D-glucose 1-phosphate site; that span reads EK.

It belongs to the bacterial/plant glucose-1-phosphate adenylyltransferase family. In terms of assembly, homotetramer.

It carries out the reaction alpha-D-glucose 1-phosphate + ATP + H(+) = ADP-alpha-D-glucose + diphosphate. It participates in glycan biosynthesis; glycogen biosynthesis. Functionally, involved in the biosynthesis of ADP-glucose, a building block required for the elongation reactions to produce glycogen. Catalyzes the reaction between ATP and alpha-D-glucose 1-phosphate (G1P) to produce pyrophosphate and ADP-Glc. The polypeptide is Glucose-1-phosphate adenylyltransferase 2 (Vibrio vulnificus (strain CMCP6)).